Here is a 72-residue protein sequence, read N- to C-terminus: Conotoxin Gla(2)-TxVI/B (72 aa).

An N-terminal signal peptide occupies residues 1–19 (MEKLIILLLVAAVLMSTQA). The propeptide occupies 20 to 44 (LFQEKRTMKKIDFLSKGKADAEKQR). Cystine bridges form between Cys48–Cys62, Cys55–Cys66, and Cys61–Cys70. A 4-carboxyglutamate modification is found at Glu56. Pro58 bears the 4-hydroxyproline mark. A Serine amide modification is found at Ser71.

Brominated at one of the Trp residues. As to expression, expressed by the venom duct.

Its subcellular location is the secreted. This Conus textile (Cloth-of-gold cone) protein is Conotoxin Gla(2)-TxVI/B.